The following is a 226-amino-acid chain: MEALKKMAGVTAAQYVKDGMIVGLGTGSTAYFFVEEIGRRVNEEGLQVVGVTTSSATTKQAESLGIPLKAVDEIDEIDLTVDGADEVDKEFNGIKGGGAALLMEKIVATPTKEYIWVVDESKMVEKLGAFKLPVEVVQYGAERLFRVFEKAGYNPSFRMKEDQKLITDMGNFIIDLDLKVIEKPFEFAEMLDKTVGVVEHGLFNGMVHKVIVAGKDGVKVLEAPSK.

Substrate-binding positions include 26–29 (TGST), 82–85 (DGAD), and 95–98 (KGGG). Residue Glu104 is the Proton acceptor of the active site. Lys122 contacts substrate.

It belongs to the ribose 5-phosphate isomerase family. In terms of assembly, homodimer.

It carries out the reaction aldehydo-D-ribose 5-phosphate = D-ribulose 5-phosphate. Its pathway is carbohydrate degradation; pentose phosphate pathway; D-ribose 5-phosphate from D-ribulose 5-phosphate (non-oxidative stage): step 1/1. Catalyzes the reversible conversion of ribose-5-phosphate to ribulose 5-phosphate. This Streptococcus uberis (strain ATCC BAA-854 / 0140J) protein is Ribose-5-phosphate isomerase A.